Consider the following 200-residue polypeptide: Probable GTP-binding protein EngB (200 aa).

The EngB-type G domain occupies 26–200 (SIPEIAIAGR…IYEIAQCIKK (175 aa)). Residues 34 to 41 (GRSNVGKS), 61 to 65 (GCTKQ), 80 to 83 (DLPG), 147 to 150 (TKID), and 179 to 181 (TSS) contribute to the GTP site. Residues serine 41 and threonine 63 each contribute to the Mg(2+) site.

Belongs to the TRAFAC class TrmE-Era-EngA-EngB-Septin-like GTPase superfamily. EngB GTPase family. Mg(2+) serves as cofactor.

Its function is as follows. Necessary for normal cell division and for the maintenance of normal septation. The protein is Probable GTP-binding protein EngB of Ehrlichia chaffeensis (strain ATCC CRL-10679 / Arkansas).